A 481-amino-acid polypeptide reads, in one-letter code: Protein FAM83E (481 aa).

The tract at residues 1–296 (MAASQLAALE…LYAASRPLSA (296 aa)) is DUF1669. The interval 351-481 (KQETPTTTGP…ASGSGSGRRR (131 aa)) is disordered. Positions 371 to 385 (RTRTTSGPPTRPSRS) are enriched in low complexity. Polar residues-rich tracts occupy residues 391–400 (RLSQLSGSSD) and 465–474 (NATTSDWASG).

This sequence belongs to the FAM83 family. As to quaternary structure, directly interacts (via DUF1669) with CSNK1A1, CSNK1A1L, CSNK1D and CSNK1E. May interact with RAF1.

It localises to the cytoplasm. It is found in the perinuclear region. In terms of biological role, may play a role in MAPK signaling. In Mus musculus (Mouse), this protein is Protein FAM83E.